A 509-amino-acid polypeptide reads, in one-letter code: MVLPRLIPRLSRSAFKVAQANNRVFNAPFRGMASSAGVGSGKIRTVIGAVVDVQFEQDNLPAILNALTIDRGEGNKLVLEVAQHLGENTVRTIAMDGTEGLVRGTSVADTGAPITIPVGRGTLGRIINVCGEPIDERGPIEATKFLPIHADPPTFAEQSTTAEVLETGIKVVDLLAPYARGGKIGLFGGAGVGKTVFIQELINNIAKAHGGFSVFCGVGERTREGNDLYREMKETGVINLEGESKVTLVFGQMNEPPGARARVALTGLTIAEYFRDEEGQDVLLFVDNIFRFTQAGSEVSALLGRIPSAVGYQPTLATDMGALQERITTTQKGSVTSVQAVYVPADDLTDPAPATTFAHLDATTVLSRGISELGIYPAVDPLDSKSRLLDIDVVGQEHYDVASNVQQTLQAYKSLQDIIAILGMDELSEQDKLTVERARKIQRFLSQPFTVAEVFTGIEGRLVSLKDTVRSFKEILDGKHDALPEAAFYMVGGIEEVVAKAEKLAAESK.

A mitochondrion-targeting transit peptide spans 1–32 (MVLPRLIPRLSRSAFKVAQANNRVFNAPFRGM). 189–196 (GAGVGKTV) contacts ATP.

As to quaternary structure, F-type ATP synthases have 2 components, the catalytic core F(1) and the membrane-embedded component F(0), linked together by a central stalk and a peripheral stalk. The central stalk, also called rotor shaft, is often seen as part of F(1). The peripheral stalk is seen as part of F(0). F(0) contains the membrane channel next to the rotor. F-type ATP synthases form dimers but each monomer functions independently in ATP generation. The dimer consists of 17 different polypeptides: ATP1 (subunit alpha, 3 molecules per monomer, part of F(1)), ATP2 (subunit beta, 3 copies per monomer, part of F(1)), ATP3 (subunit gamma, part of the central stalk), ATP4 (subunit b, part of the peripheral stalk), ATP5/OSCP (subunit 5/OSCP, part of the peripheral stalk), ATP6 (subunit a, part of the peripheral stalk), ATP7 (subunit d, part of the peripheral stalk), ATP8 (subunit 8, part of the peripheral stalk), OLI1 (subunit c, part of the rotor, 10 molecules per monomer), ATP14 (subunit h, part of the peripheral stalk), ATP15 (subunit epsilon, part of the central stalk), ATP16 (subunit delta, part of the central stalk), ATP17 (subunit f, part of the peripheral stalk), ATP18 (subunit i/j, part of the peripheral stalk), ATP19 (subunit k, dimer-specific, at interface between monomers), ATP20 (subunit g, at interface between monomers), TIM11 (subunit e, at interface between monomers).

The protein localises to the mitochondrion inner membrane. The catalysed reaction is ATP + H2O + 4 H(+)(in) = ADP + phosphate + 5 H(+)(out). Its function is as follows. Mitochondrial membrane ATP synthase (F(1)F(0) ATP synthase or Complex V) produces ATP from ADP in the presence of a proton gradient across the membrane which is generated by electron transport complexes of the respiratory chain. F-type ATP synthases consist of two structural domains, F(1) - containing the extramembraneous catalytic core, and F(0) - containing the membrane proton channel, linked together by a central stalk and a peripheral stalk. During catalysis, ATP synthesis in the catalytic domain of F(1) is coupled via a rotary mechanism of the central stalk subunits to proton translocation. Subunits alpha/ATP1 and beta/ATP2 form the catalytic core in F(1). Rotation of the central stalk against the surrounding alpha/ATP1(3)beta/ATP2(3) subunits leads to hydrolysis of ATP in three separate catalytic sites on the beta/ATP2 subunits. The polypeptide is ATP synthase subunit beta, mitochondrial (Yarrowia lipolytica (strain CLIB 122 / E 150) (Yeast)).